The following is a 219-amino-acid chain: Probable GTP-binding protein EngB (219 aa).

One can recognise an EngB-type G domain in the interval 24 to 207 (VQPEVAFAGR…HALIESWVRP (184 aa)). Residues 32–39 (GRSNAGKS), 59–63 (GRTQH), 81–84 (DLPG), 148–151 (TKCD), and 185–188 (LFSA) contribute to the GTP site. Mg(2+)-binding residues include S39 and T61.

This sequence belongs to the TRAFAC class TrmE-Era-EngA-EngB-Septin-like GTPase superfamily. EngB GTPase family. Mg(2+) is required as a cofactor.

Functionally, necessary for normal cell division and for the maintenance of normal septation. This is Probable GTP-binding protein EngB from Burkholderia mallei (strain ATCC 23344).